The primary structure comprises 185 residues: Inner membrane-spanning protein YciB (185 aa).

5 helical membrane passes run Ile19–Trp39, Thr49–His69, Thr72–Thr92, Gly122–Phe142, and Phe150–Ile170.

This sequence belongs to the YciB family.

It localises to the cell inner membrane. Plays a role in cell envelope biogenesis, maintenance of cell envelope integrity and membrane homeostasis. The sequence is that of Inner membrane-spanning protein YciB from Acidithiobacillus ferrooxidans (strain ATCC 23270 / DSM 14882 / CIP 104768 / NCIMB 8455) (Ferrobacillus ferrooxidans (strain ATCC 23270)).